Consider the following 302-residue polypeptide: Nucleotide-binding protein Bcep1808_2900 (302 aa).

Residue 8–15 (GISGSGKS) coordinates ATP. 57–60 (DARS) serves as a coordination point for GTP.

It belongs to the RapZ-like family.

In terms of biological role, displays ATPase and GTPase activities. The polypeptide is Nucleotide-binding protein Bcep1808_2900 (Burkholderia vietnamiensis (strain G4 / LMG 22486) (Burkholderia cepacia (strain R1808))).